The following is a 216-amino-acid chain: MILVPLITVTVVAGTILVCYILYICRKKIRTVYNDNKIIMTKLKKIKSSNSSKSSKSTDNESDWEDHCSAMEQNNDVDNISRNEILDDDSFAGSLIWDNESNVIAPSTEHIYDSVAGSTRLINNDCNEQTIYQNTTVINETETIEVLNEDTKQNPSYSSNPFVNYNKTSICSKSNPFITELNNKFSENNPFRRAHSDDYLNKQEHDDIESSVVSLV.

Residue Met-1 is a topological domain, extracellular. A helical membrane pass occupies residues 2–22; that stretch reads ILVPLITVTVVAGTILVCYIL. Residues 23 to 216 lie on the Cytoplasmic side of the membrane; it reads YICRKKIRTV…DIESSVVSLV (194 aa). Phosphotyrosine; by host is present on residues Tyr-112 and Tyr-132. 3 short sequence motifs (NPF-motif) span residues 160–162, 175–177, and 189–191; these read NPF.

Belongs to the orthopoxvirus OPG164 protein family. Interacts with host NCK. Interacts with protein OPG161 (via C-terminus). Interacts with protein OPG056. Interacts (via C-terminus) with host kinesin light chain/KLC1. Interacts with host intersectin-1/ITSN1 and EPS15. In terms of processing, phosphorylated on Tyr-112 and Tyr-132. Phosphorylations activate the host ARP2-ARP3 complex and lead to actin nucleation.

The protein localises to the host cell membrane. Its function is as follows. Involved in the intracellular transport and egress of virions to the host cell surface with help of protein OPG056. Also participates in the formation of actin tails at the plasma membrane to allow efficient actin-based motility and thus cell to cell transmission of viral particles. Recruits host intersectin-1/ITSN1 and activates host CDC42 to drive ARP2/3-mediated actin polymerization. In Variola virus (isolate Human/India/Ind3/1967) (VARV), this protein is Protein OPG164 (OPG164).